A 904-amino-acid chain; its full sequence is MEVNCLTLKDLISPRQTRLDFAIEDAENAQKENIFVDRSRMTPKTPMKNEPIDLSKQRIFTPDRNPITPVKPVDRQPQVEPWTPTANLKMLISAASPDIRDREKKKELFRPIENKEDAFVNSLQLDVAGDGAVDEYEKQRPSRKQKSLGLLCQKFLARYPSYPLSTEKTTISLDEVAVSLGVERRRIYDIVNVLESLHLVSRVAKNQYGWHGRHSLPKTLRTLQRLGEEQKYEEQMACLQQKELDLMGYRFGERRKDGSPDPRDPHLLDFSEADYPSSSANSRKDKSLRIMSQKFVMLFLVSKTKIVTLDVAAKILIEESQDTPDHSKFKTKVRRLYDIANVLTSLALIKKVHVTEERGRKPAFKWIGPVDFSSIDEELLDVSASILPELKKEAYGQIRVCAKERLVRYGSFNTVHTSEKIQRKVSSEPSSPQGERQGSAYSLEIGSLAAIYRQKVEDNSQEEAFVSNTAVPPASILDPALSMDSEYCVKPLAQPVFSVAQTDLPAFSAQNGPSGQVGVPVPSAASDTENLKPALLAGQPLVYVPSTQLFMLYGSVQEGLSPESRSEEDGGGSDVPADLSVTPSAQKRLCEERDPQEEEDEPAMKRQSQEFEDSPLSLVMPKKPSSSTDLACPVTMGNGSSPPLEDACVKGQLPAAEEVTGKAAPNCYVASECGNPARNPDTEKPSNENEITKDPSLMQYLYVQSPAGLNGFNMVLPGTQTPHTVAPSPAQLPSFGVPCMFLQSPGLGPFPVLYSPAIPGPISSAPGTHPNPGPMNFGLSTLASASHLLISPAAMVNPKPSTLPCTDPQLRCQPSLNLNPVMPGSHGVIHPESPCYVRHPVSMVKAEQSPAPATPKSIQRRHRETFFKTPGSLGDPVFRRKERNQSRNTSSAQRRLEISSSGPD.

Positions 61 to 80 (TPDRNPITPVKPVDRQPQVE) are disordered. Phosphoserine is present on S96. Residues 143-212 (RKQKSLGLLC…VAKNQYGWHG (70 aa)) mediate DNA binding. Positions 252 to 269 (GERRKDGSPDPRDPHLLD) are enriched in basic and acidic residues. The interval 252-283 (GERRKDGSPDPRDPHLLDFSEADYPSSSANSR) is disordered. The DNA-binding element occupies 283–368 (RKDKSLRIMS…GRKPAFKWIG (86 aa)). A Phosphoserine modification is found at S411. Positions 560-628 (LSPESRSEED…VMPKKPSSST (69 aa)) are disordered. At S833 the chain carries Phosphoserine. A disordered region spans residues 846–904 (AEQSPAPATPKSIQRRHRETFFKTPGSLGDPVFRRKERNQSRNTSSAQRRLEISSSGPD). Residues 886 to 904 (SRNTSSAQRRLEISSSGPD) are compositionally biased toward polar residues.

The protein belongs to the E2F/DP family. As to quaternary structure, interacts with HIF1A. Homodimer and heterodimer: mainly forms homodimers and, to a lesser extent, heterodimers with E2F8. Dimerization is important for DNA-binding. Interacts with MN1. Widely expressed with highest levels in skin and thymus and very low levels in brain, muscle and stomach. Expressed in trophoblast giant cells throughout placenta development (at protein level).

It localises to the nucleus. Its function is as follows. Atypical E2F transcription factor that participates in various processes such as angiogenesis, polyploidization of specialized cells and DNA damage response. Mainly acts as a transcription repressor that binds DNA independently of DP proteins and specifically recognizes the E2 recognition site 5'-TTTC[CG]CGC-3'. Directly represses transcription of classical E2F transcription factors such as E2F1. Acts as a regulator of S-phase by recognizing and binding the E2-related site 5'-TTCCCGCC-3' and mediating repression of G1/S-regulated genes. Plays a key role in polyploidization of cells in placenta and liver by regulating the endocycle, probably by repressing genes promoting cytokinesis and antagonizing action of classical E2F proteins (E2F1, E2F2 and/or E2F3). Required for placental development by promoting polyploidization of trophoblast giant cells. Also involved in DNA damage response: up-regulated by p53/TP53 following genotoxic stress and acts as a downstream effector of p53/TP53-dependent repression by mediating repression of indirect p53/TP53 target genes involved in DNA replication. Acts as a promoter of sprouting angiogenesis, possibly by acting as a transcription activator: associates with HIF1A, recognizes and binds the VEGFA promoter, which is different from canonical E2 recognition site, and activates expression of the VEGFA gene. Acts as a negative regulator of keratinocyte differentiation. This Mus musculus (Mouse) protein is Transcription factor E2F7 (E2f7).